Consider the following 195-residue polypeptide: Porimin (195 aa).

A signal peptide spans 1–23 (MALCARAALLLGVLQVLALLGAA). Residues 24 to 152 (QDPTDAQGSA…PTKGKGSKFD (129 aa)) are Extracellular-facing. 6 N-linked (GlcNAc...) asparagine glycosylation sites follow: asparagine 36, asparagine 45, asparagine 51, asparagine 59, asparagine 109, and asparagine 115. The disordered stretch occupies residues 99–127 (VTPTASKSTPNASASPNSTHTSASMTTPA). Polar residues predominate over residues 101–126 (PTASKSTPNASASPNSTHTSASMTTP). Residues 153 to 173 (AGSFVGGIVLTLGVLSILYIG) form a helical membrane-spanning segment. At 174 to 195 (CKMYYSRRGIRYRSIDEHDAII) the chain is on the cytoplasmic side. Serine 187 carries the post-translational modification Phosphoserine.

The protein belongs to the CD164 family.

It is found in the membrane. Implicated in oncotic cell death, characterized by cell swelling, organelle swelling, vacuolization and increased membrane permeability. This chain is Porimin (Tmem123), found in Mus musculus (Mouse).